The sequence spans 1100 residues: Serine/threonine/tyrosine-interacting-like protein 2 (1100 aa).

The span at 1 to 12 shows a compositional bias: polar residues; that stretch reads MASSVEDQQLQQ. Residues 1–21 form a disordered region; that stretch reads MASSVEDQQLQQEEAESVKDV. Residues 141 to 289 form the Tyrosine-protein phosphatase domain; the sequence is SPVDEVWPNV…LRQLNETLME (149 aa). Polar residues predominate over residues 356 to 374; the sequence is CGSQQPNMQQPADQPSLPG. Disordered regions lie at residues 356–383, 411–436, 479–504, 542–561, 575–615, 667–686, 888–1060, and 1075–1100; these read CGSQ…EDGD, EDED…TSED, AAAR…DDVQ, KENA…APDL, KQQK…ERSR, VLSG…TPAP, CEKP…DEEI, and VAEE…HDHK. Basic and acidic residues predominate over residues 418–428; the sequence is DKTQRAVRPDD. Positions 580-615 are enriched in basic and acidic residues; sequence HGGEENKEEILQMSRGEDTATARRRQRREEVLERSR. Low complexity predominate over residues 667 to 676; it reads VLSGRSTRSL. Residues 888–898 are compositionally biased toward basic and acidic residues; the sequence is CEKPKPKRDYG. Polar residues-rich tracts occupy residues 907–916, 994–1013, and 1029–1041; these read ASANNPTSSI, SYSS…TSFA, and FQNH…SSVY. Positions 1089 to 1100 are enriched in basic and acidic residues; the sequence is RKQEESKSHDHK.

It belongs to the protein-tyrosine phosphatase family. Non-receptor class dual specificity subfamily. Expressed in muscle fibers in a regular striated pattern (at protein level).

The protein resides in the cytoplasm. Its subcellular location is the myofibril. It localises to the sarcomere. Required for myofiber maturation. This chain is Serine/threonine/tyrosine-interacting-like protein 2 (styxl2), found in Danio rerio (Zebrafish).